The sequence spans 646 residues: Amyloid beta A4 precursor protein-binding family B member 1-interacting protein (646 aa).

The disordered stretch occupies residues 82–141 (FATERDTSKGSVPVAPAPSKPQSNFSLPASFDSSKPATSSNSIAAPPPPPAFKPSKEEEE). Positions 101-116 (KPQSNFSLPASFDSSK) are enriched in polar residues. Residues 162 to 248 (KKLVVKVEIT…NKVLFQEKKH (87 aa)) enclose the Ras-associating domain. The 110-residue stretch at 292–401 (VPDLEGVLYL…WVTGIRVAKY (110 aa)) folds into the PH domain. The segment at 420-646 (ASWANRTIQA…NAMQKKRTQP (227 aa)) is disordered. A compositionally biased stretch (low complexity) spans 429 to 445 (ASSTASTPSPTPKAKAA). 4 stretches are compositionally biased toward pro residues: residues 465–500 (LPPP…PPVP), 509–536 (FPPP…PPPE), 560–577 (LPPP…PPPA), and 584–598 (APPP…PAPA).

This sequence belongs to the MRL family.

The protein resides in the cell membrane. Its subcellular location is the cytoplasm. It is found in the cytoskeleton. Appears to function in the signal transduction from Ras activation to actin cytoskeletal remodeling. This chain is Amyloid beta A4 precursor protein-binding family B member 1-interacting protein (apbb1ip), found in Danio rerio (Zebrafish).